The sequence spans 549 residues: Myotubularin-related protein 9 (549 aa).

Position 1 is an N-acetylmethionine (M1). Residues 4–99 (AELIKTPRVD…LNIASSIEAL (96 aa)) enclose the GRAM domain. A Myotubularin phosphatase domain is found at 123-498 (GWHSFLPEQE…QSLQLWEGIF (376 aa)). Positions 508–542 (LDEAYEEMVNIIEYNKELQAKVNLLRRQLAELETE) form a coiled coil. The residue at position 548 (S548) is a Phosphoserine.

The protein belongs to the protein-tyrosine phosphatase family. Non-receptor class myotubularin subfamily. In terms of assembly, homodimer. Heterodimer (via C-terminus) with lipid phosphatase MTMR6 (via C-terminus). Heterodimer (via coiled coil domain) with lipid phosphatase MTMR7 (via C-terminus). Heterodimer with lipid phosphatase MTMR8.

It localises to the cytoplasm. The protein localises to the cell projection. It is found in the ruffle membrane. The protein resides in the perinuclear region. Its subcellular location is the endoplasmic reticulum. Acts as an adapter for myotubularin-related phosphatases. Increases lipid phosphatase MTMR6 catalytic activity, specifically towards phosphatidylinositol 3,5-bisphosphate, and MTMR6 binding affinity for phosphorylated phosphatidylinositols. Positively regulates lipid phosphatase MTMR7 catalytic activity. Increases MTMR8 catalytic activity towards phosphatidylinositol 3-phosphate. The formation of the MTMR6-MTMR9 complex, stabilizes both MTMR6 and MTMR9 protein levels. Stabilizes MTMR8 protein levels. Plays a role in the late stages of macropinocytosis possibly by regulating MTMR6-mediated dephosphorylation of phosphatidylinositol 3-phosphate in membrane ruffles. Negatively regulates autophagy, in part via its association with MTMR8. Negatively regulates DNA damage-induced apoptosis, in part via its association with MTMR6. Does not bind mono-, di- and tri-phosphorylated phosphatidylinositols, phosphatidic acid and phosphatidylserine. This chain is Myotubularin-related protein 9 (MTMR9), found in Bos taurus (Bovine).